A 227-amino-acid polypeptide reads, in one-letter code: Large ribosomal subunit protein uL3 (227 aa).

The segment at 144–166 (RRGPMAHGSKNHRLPGSTGPGTT) is disordered.

It belongs to the universal ribosomal protein uL3 family. In terms of assembly, part of the 50S ribosomal subunit. Forms a cluster with proteins L14 and L19.

One of the primary rRNA binding proteins, it binds directly near the 3'-end of the 23S rRNA, where it nucleates assembly of the 50S subunit. This chain is Large ribosomal subunit protein uL3, found in Trichodesmium erythraeum (strain IMS101).